A 123-amino-acid chain; its full sequence is Large ribosomal subunit protein bL21 (123 aa).

It belongs to the bacterial ribosomal protein bL21 family. As to quaternary structure, part of the 50S ribosomal subunit. Contacts protein L20.

This protein binds to 23S rRNA in the presence of protein L20. The chain is Large ribosomal subunit protein bL21 from Rhizobium meliloti (strain 1021) (Ensifer meliloti).